A 255-amino-acid polypeptide reads, in one-letter code: Putative Myb family transcription factor At1g14600 (255 aa).

The region spanning 20 to 80 is the HTH myb-type domain; that stretch reads RSPVPRLRWT…HLQMYRGSRI (61 aa). The H-T-H motif DNA-binding region spans 51 to 76; sequence PKLVLKIMDVKGLTISHVKSHLQMYR. Residues 80 to 110 are disordered; it reads ITLLGKPEESSSPSSRRRRRQDNEEDHLHDN.

The protein localises to the nucleus. Putative transcription factor. This Arabidopsis thaliana (Mouse-ear cress) protein is Putative Myb family transcription factor At1g14600.